Here is a 397-residue protein sequence, read N- to C-terminus: Mannonate dehydratase (397 aa).

This sequence belongs to the mannonate dehydratase family. Requires Fe(2+) as cofactor. The cofactor is Mn(2+).

It carries out the reaction D-mannonate = 2-dehydro-3-deoxy-D-gluconate + H2O. The protein operates within carbohydrate metabolism; pentose and glucuronate interconversion. Catalyzes the dehydration of D-mannonate. The polypeptide is Mannonate dehydratase (Yersinia pestis bv. Antiqua (strain Antiqua)).